The chain runs to 136 residues: ATP synthase epsilon chain, chloroplastic (136 aa).

This sequence belongs to the ATPase epsilon chain family. In terms of assembly, F-type ATPases have 2 components, CF(1) - the catalytic core - and CF(0) - the membrane proton channel. CF(1) has five subunits: alpha(3), beta(3), gamma(1), delta(1), epsilon(1). CF(0) has three main subunits: a, b and c.

The protein localises to the plastid. Its subcellular location is the chloroplast thylakoid membrane. In terms of biological role, produces ATP from ADP in the presence of a proton gradient across the membrane. This Tetradesmus obliquus (Green alga) protein is ATP synthase epsilon chain, chloroplastic.